A 409-amino-acid chain; its full sequence is Elongation factor Tu, chloroplastic (409 aa).

One can recognise a tr-type G domain in the interval 10-214 (KPHVNIGTIG…NVDSYIPTPA (205 aa)). The segment at 19 to 26 (GHVDHGKT) is G1. Residue 19–26 (GHVDHGKT) coordinates GTP. T26 is a Mg(2+) binding site. Residues 60–64 (GITIN) form a G2 region. The interval 81–84 (DCPG) is G3. GTP is bound by residues 81–85 (DCPGH) and 136–139 (NKED). The segment at 136–139 (NKED) is G4. The G5 stretch occupies residues 174–176 (SAL).

Belongs to the TRAFAC class translation factor GTPase superfamily. Classic translation factor GTPase family. EF-Tu/EF-1A subfamily.

The protein resides in the plastid. The protein localises to the chloroplast. The catalysed reaction is GTP + H2O = GDP + phosphate + H(+). Its function is as follows. GTP hydrolase that promotes the GTP-dependent binding of aminoacyl-tRNA to the A-site of ribosomes during protein biosynthesis. This chain is Elongation factor Tu, chloroplastic (tufA), found in Ostreococcus tauri.